The chain runs to 337 residues: Eukaryotic translation initiation factor 3 subunit H (337 aa).

In terms of domain architecture, MPN spans 21 to 153; it reads VQCDGLAVMK…LKAYRLTPQA (133 aa).

Belongs to the eIF-3 subunit H family. In terms of assembly, component of the eukaryotic translation initiation factor 3 (eIF-3) complex. The eIF-3 complex interacts with pix. Interacts with mxt.

The protein resides in the cytoplasm. Component of the eukaryotic translation initiation factor 3 (eIF-3) complex, which is involved in protein synthesis of a specialized repertoire of mRNAs and, together with other initiation factors, stimulates binding of mRNA and methionyl-tRNAi to the 40S ribosome. The eIF-3 complex specifically targets and initiates translation of a subset of mRNAs involved in cell proliferation. The chain is Eukaryotic translation initiation factor 3 subunit H from Drosophila willistoni (Fruit fly).